The chain runs to 166 residues: Ubiquitin-conjugating enzyme E2 7 (166 aa).

The residue at position 2 (Ala-2) is an N-acetylalanine. The region spanning 4 to 164 (QASLLLQKQL…VSRCVRKSQE (161 aa)) is the UBC core domain. Cys-89 (glycyl thioester intermediate) is an active-site residue.

This sequence belongs to the ubiquitin-conjugating enzyme family.

The catalysed reaction is S-ubiquitinyl-[E1 ubiquitin-activating enzyme]-L-cysteine + [E2 ubiquitin-conjugating enzyme]-L-cysteine = [E1 ubiquitin-activating enzyme]-L-cysteine + S-ubiquitinyl-[E2 ubiquitin-conjugating enzyme]-L-cysteine.. Its pathway is protein modification; protein ubiquitination. Its function is as follows. Accepts the ubiquitin from the E1 complex and catalyzes its covalent attachment to other proteins. Involved in the formation of multiubiquitin chains. Signal the protein for selective degradation. The chain is Ubiquitin-conjugating enzyme E2 7 (UBC7) from Arabidopsis thaliana (Mouse-ear cress).